Reading from the N-terminus, the 309-residue chain is uncharacterized protein (309 aa).

Positions 11–87 (QRLDTFLATL…FPLDILYEDE (77 aa)) constitute an S4 RNA-binding domain. The active site involves aspartate 131.

The protein belongs to the pseudouridine synthase RluA family.

The enzyme catalyses a uridine in RNA = a pseudouridine in RNA. This is an uncharacterized protein from Mycoplasma pneumoniae (strain ATCC 29342 / M129 / Subtype 1) (Mycoplasmoides pneumoniae).